The primary structure comprises 351 residues: Phospho-N-acetylmuramoyl-pentapeptide-transferase (351 aa).

10 helical membrane passes run 22–42 (ILAF…FISW), 65–85 (TPTM…LITT), 87–107 (FNKY…LGFI), 128–148 (FLLQ…VGFD), 158–178 (YPIF…IVAM), 190–210 (GLAT…LYIV), 225–245 (LGVG…LGFL), 254–274 (VFMG…LAIV), 279–299 (LLLI…ILQV), and 328–348 (KITI…ILSI).

Belongs to the glycosyltransferase 4 family. MraY subfamily. Mg(2+) is required as a cofactor.

Its subcellular location is the cell inner membrane. It catalyses the reaction UDP-N-acetyl-alpha-D-muramoyl-L-alanyl-gamma-D-glutamyl-meso-2,6-diaminopimeloyl-D-alanyl-D-alanine + di-trans,octa-cis-undecaprenyl phosphate = di-trans,octa-cis-undecaprenyl diphospho-N-acetyl-alpha-D-muramoyl-L-alanyl-D-glutamyl-meso-2,6-diaminopimeloyl-D-alanyl-D-alanine + UMP. The protein operates within cell wall biogenesis; peptidoglycan biosynthesis. Its function is as follows. Catalyzes the initial step of the lipid cycle reactions in the biosynthesis of the cell wall peptidoglycan: transfers peptidoglycan precursor phospho-MurNAc-pentapeptide from UDP-MurNAc-pentapeptide onto the lipid carrier undecaprenyl phosphate, yielding undecaprenyl-pyrophosphoryl-MurNAc-pentapeptide, known as lipid I. The protein is Phospho-N-acetylmuramoyl-pentapeptide-transferase of Nautilia profundicola (strain ATCC BAA-1463 / DSM 18972 / AmH).